Reading from the N-terminus, the 121-residue chain is Flagellar protein FliT (121 aa).

The tract at residues 1–50 is required for homodimerization; it reads MNHAPHLYFAWQQLVEKSQLMLRLATEEQWDELIASEMAYVNAVQEIAHL. The fliD binding stretch occupies residues 60-98; that stretch reads MQEQLRPMLRLILDNESKVKQLLQIRMDELAKLVGQSSV.

The protein belongs to the FliT family. In terms of assembly, homodimer. Interacts with FliD and FlhC.

The protein localises to the cytoplasm. It is found in the cytosol. Functionally, dual-function protein that regulates the transcription of class 2 flagellar operons and that also acts as an export chaperone for the filament-capping protein FliD. As a transcriptional regulator, acts as an anti-FlhDC factor; it directly binds FlhC, thus inhibiting the binding of the FlhC/FlhD complex to class 2 promoters, resulting in decreased expression of class 2 flagellar operons. As a chaperone, effects FliD transition to the membrane by preventing its premature polymerization, and by directing it to the export apparatus. The polypeptide is Flagellar protein FliT (Escherichia coli (strain ATCC 8739 / DSM 1576 / NBRC 3972 / NCIMB 8545 / WDCM 00012 / Crooks)).